The sequence spans 822 residues: MNKEEYSDISDSESEEVHETNNHNEHEHEEEDDTPEIVVPERKFLKEDEDYSVPFPVMRECLVLLLQSRRILRDMMYYRFKMDRFLSGNLSVFEIQNLLHSQREDKESDWIAEIQELKRNLVSEVRRNHTLERDLNRLDKRIALLIKNRGNIQDVLADKAGLKAPKHKGDQKKPELINDPKKLEAYQNLFYLLQTEPKYLAGLVYLIQPEQMESFLGTVILTLFGDAFTPREEFLLLSLYRLSIQKEMANIATVGDFLKADTVVPKMIITYNKRKQGTDYLKAVIGPILSNVIKQELNLELKPNLVYAAIISEQEIRTGEKSTLDRNVSHEKALEVPEVTKTIKARVDQLISICEQFLDGIISSLNRLPYGIRWICKQIYQIAEKNFTKSTQDEILKVIGYFIYYRFIQVAMVSPEEYDLVGREIHPTARKNLINVSKVLQALFNFAQFGSSEKHFIPLNGWITSHMGDIKNYLQEIIEVGEPEDYLQVDKYMELTQKTKPVIIISLPEICNTHQLISKNLDSLVAKGEKDDPMRIIMKELDEFGPPPDIAADDDREVQLTLSNKFQKTIEEELSPGESLLSQTKEMVISLLRALPTLPEQKDQSDEPPNLVDVLNKARQADPSLEPEIKKILDNLKKLEEYNLTTSADNYSSFLKAVALEVVNRAEIREQQKKEKQRLTTSLNNLRKHQKYLNEQIAQYNQYLQDCRLKHYQNKSKKKKKGDGAKVGPFKFSFSELHKKGVIVDSEVPQITRKKIKFVISSDTVGVFDVSAKMAGIDVQTMRLELDDLLELNSIGTTTLELDQITLDVNMTIHLLNKLFLY.

Residues 1–36 (MNKEEYSDISDSESEEVHETNNHNEHEHEEEDDTPE) are disordered. Positions 15-27 (EEVHETNNHNEHE) are enriched in basic and acidic residues. Residues 104 to 152 (EDKESDWIAEIQELKRNLVSEVRRNHTLERDLNRLDKRIALLIKNRGNI) are a coiled coil. A required for interaction to rac1A region spans residues 161–822 (GLKAPKHKGD…IHLLNKLFLY (662 aa)). The 244-residue stretch at 234–477 (FLLLSLYRLS…GDIKNYLQEI (244 aa)) folds into the Ras-GAP domain.

In terms of assembly, heterotetramer. Quaternary complex with activated rac1A, ctxA and ctxB. Interacts directly with rac1A and ctxA. Preferentially interacts with activated forms of rac1A, rac1B and rac1C. Interacts with racE.

Its subcellular location is the cytoplasm. It is found in the cell cortex. The protein localises to the cleavage furrow. Part of signaling pathway that is required for completion of cytokinesis. gapA and rgaA control cortexillin localization to the cleavage furrow and hence may be involved in cleavage of the midbody in the final stage of cytokinesis by regulating the actin cytoskeleton. Forms a complex by linking activated rac1A to ctxA. Assembly of this complex is necessary for the recruitment of cortexillin to the midzone of a dividing cell. Overexpression leads to the suppression of the formation of cellular projections containing F-actin and to a defect in cytokinesis. The chain is Ras GTPase-activating-like protein rgaA (rgaA) from Dictyostelium discoideum (Social amoeba).